The following is a 458-amino-acid chain: ATP synthase subunit beta (458 aa).

148 to 155 (GGAGVGKT) serves as a coordination point for ATP.

The protein belongs to the ATPase alpha/beta chains family. In terms of assembly, F-type ATPases have 2 components, CF(1) - the catalytic core - and CF(0) - the membrane proton channel. CF(1) has five subunits: alpha(3), beta(3), gamma(1), delta(1), epsilon(1). CF(0) has three main subunits: a(1), b(2) and c(9-12). The alpha and beta chains form an alternating ring which encloses part of the gamma chain. CF(1) is attached to CF(0) by a central stalk formed by the gamma and epsilon chains, while a peripheral stalk is formed by the delta and b chains.

The protein localises to the cell inner membrane. It carries out the reaction ATP + H2O + 4 H(+)(in) = ADP + phosphate + 5 H(+)(out). Functionally, produces ATP from ADP in the presence of a proton gradient across the membrane. The catalytic sites are hosted primarily by the beta subunits. This is ATP synthase subunit beta from Mannheimia succiniciproducens (strain KCTC 0769BP / MBEL55E).